Reading from the N-terminus, the 722-residue chain is Polyribonucleotide nucleotidyltransferase (722 aa).

D487 and D493 together coordinate Mg(2+). Residues 554–613 enclose the KH domain; it reads PRIETFKIPTDKIREVIGTGGKVIREIVEKTGAKVNIEDDGTVKVASSDGESIKAAIKWI. In terms of domain architecture, S1 motif spans 623–691; the sequence is GEIYEGTVVK…DRGKTRLSMK (69 aa). The disordered stretch occupies residues 691–722; that stretch reads KVVDQDTGEDLEAKQKAEAKAEDEAPAQAAGE. Residues 701 to 713 are compositionally biased toward basic and acidic residues; that stretch reads LEAKQKAEAKAED.

The protein belongs to the polyribonucleotide nucleotidyltransferase family. The cofactor is Mg(2+).

Its subcellular location is the cytoplasm. The catalysed reaction is RNA(n+1) + phosphate = RNA(n) + a ribonucleoside 5'-diphosphate. Its function is as follows. Involved in mRNA degradation. Catalyzes the phosphorolysis of single-stranded polyribonucleotides processively in the 3'- to 5'-direction. This chain is Polyribonucleotide nucleotidyltransferase, found in Rhodopseudomonas palustris (strain BisB5).